The following is a 264-amino-acid chain: Stress response regulator protein 1 (264 aa).

The disordered stretch occupies residues 50–74 (IYSDCDNNKNNNDDDDDDDDYNKDT). The segment covering 62-74 (DDDDDDDDYNKDT) has biased composition (acidic residues). Positions 138–256 (RFLIVDDNII…LDLIGGSIDD (119 aa)) constitute a Response regulatory domain. At aspartate 189 the chain carries 4-aspartylphosphate.

Its function is as follows. Required for stress adaptation, morphogenesis and virulence. The polypeptide is Stress response regulator protein 1 (SRR1) (Candida tropicalis (strain ATCC MYA-3404 / T1) (Yeast)).